Reading from the N-terminus, the 212-residue chain is KxDL motif-containing protein CG10681 (212 aa).

Residues 128 to 159 (RSSLAEEAEDDTEAQAKKTAETPAPAAAKPVL) are disordered. A compositionally biased stretch (low complexity) spans 148-157 (ETPAPAAAKP).

The protein belongs to the KXD1 family.

This is KxDL motif-containing protein CG10681 from Drosophila melanogaster (Fruit fly).